We begin with the raw amino-acid sequence, 545 residues long: MNGKRPADPGPARPMKKGKKQVSAEFSDAVTEEILRKQVAEAWSCRTPFSHEAIALDMDPFLHCVIPNFIQSQDFLEGLHKELLSLDFHEKYNDLYKFQQSDDLKNRKEPHISALRKLMFEDFRAWLSKVSGIDLEPTIDMSCAKYEFTDALLCHDDELEGRRIAFILYLVPSWDRDLGGTLDLYDTDEHLQPKQIVKSLIPSWNKLVFFEVSPVSFHQVSEVLSEETSRLSISGWFYGPSLTRPPTYFEPPIPRNPHIPQDHEILYEWINPAYLEMDYQMQIQEEFEERSEILLKEFLKPEKFAEVCEALEKGDVEWKSHGPPNKRFYEKAEENNLPDVLKECMGLFRSEALFLLLSNLTGLKLHFLAPSEDDETEEKGEGETASAAAGTEEGTSRRPSGPENNQVAAGSHSQENGEQADPEAQEEEAKKESSVPMCQGELRRWKTGHYTLVHDNTKTEFALDLFLYCGCEGWEPEYGGFTSYIAKGEDEELLIVNPENNSLALVYRDRETLRFVKHINHRSLEQSKAFPSRSGFWDFAFIYYE.

Positions 1-23 are disordered; sequence MNGKRPADPGPARPMKKGKKQVS. Residues 137–239 enclose the Fe2OG dioxygenase domain; sequence PTIDMSCAKY…RLSISGWFYG (103 aa). Residues histidine 155 and aspartate 157 each contribute to the Fe cation site. Tyrosine 169 is a binding site for 2-oxoglutarate. Position 218 (histidine 218) interacts with Fe cation. Arginine 230 serves as a coordination point for 2-oxoglutarate. Residues 371-380 are compositionally biased toward acidic residues; the sequence is SEDDETEEKG. The interval 371–437 is disordered; sequence SEDDETEEKG…EAKKESSVPM (67 aa). Positions 383–393 are enriched in low complexity; sequence ETASAAAGTEE. The segment covering 402–417 has biased composition (polar residues); the sequence is PENNQVAAGSHSQENG.

The protein belongs to the TPA1 family. In terms of assembly, monomer. It depends on Fe(2+) as a cofactor. Requires L-ascorbate as cofactor.

It localises to the cytoplasm. Its subcellular location is the nucleus. The enzyme catalyses [ribosomal protein uS12]-L-proline + 2-oxoglutarate + O2 = [ribosomal protein uS12]-(3S)-3-hydroxy-L-proline + succinate + CO2. Functionally, prolyl 3-hydroxylase that catalyzes 3-hydroxylation of 'Pro-62' of small ribosomal subunit uS12 (RPS23), thereby regulating protein translation termination efficiency. Involved in stress granule formation. The protein is Prolyl 3-hydroxylase OGFOD1 (Ogfod1) of Mus musculus (Mouse).